A 457-amino-acid chain; its full sequence is MSPQTETKASVGFKAGVKEYKLTYYTPDYETKDTDILAAFRVTPQPGVPPEEAGAAVAAESSTGTWTTVWTDGLTSLDRYKGRCYHIEPVPGEESQFIAYVAYPLDLFEEGSVTNMFTSIVGNVFGFKALRALRLEDLRIPPAYVKTFQGPPHGIQVERDKLNKYGRPLLGCTIKPKLGLSAKNYGRAVYECLRGGLDFTKDDENVNSQPFMRWRDRFVFCAEALYKAQAETGEIKGHYLNATAGTCEEMNKRAVFARELGVPIVMHDYLTGGFTANTSLAHYCRDNGLLLHIHRAMHAVIDRQKNHGIHFRVLAKALRMSGGDHIHAGTVVGKLEGERDITSGFVDLLRDDFVKKDRSRGIYFTQDWVSLPGVLPVASGGIHVWHMPALTEIFGDDSVLQFGGGTLGHPWGNAPGAVANRVALEACVQARNEGRDLAREGNDIIREASKWSPELAA.

A propeptide spanning residues 1 to 2 (MS) is cleaved from the precursor. Position 3 is an N-acetylproline (Pro3). At Lys14 the chain carries N6,N6,N6-trimethyllysine. Substrate contacts are provided by Asn123 and Thr173. Lys175 acts as the Proton acceptor in catalysis. Residue Lys177 participates in substrate binding. The Mg(2+) site is built by Lys201, Asp203, and Glu204. Position 201 is an N6-carboxylysine (Lys201). Residue His294 is the Proton acceptor of the active site. Residues Arg295, His327, and Ser379 each coordinate substrate.

It belongs to the RuBisCO large chain family. Type I subfamily. As to quaternary structure, heterohexadecamer of 8 large chains and 8 small chains; disulfide-linked. The disulfide link is formed within the large subunit homodimers. Mg(2+) serves as cofactor. Post-translationally, the disulfide bond which can form in the large chain dimeric partners within the hexadecamer appears to be associated with oxidative stress and protein turnover.

Its subcellular location is the plastid. The protein resides in the chloroplast. It carries out the reaction 2 (2R)-3-phosphoglycerate + 2 H(+) = D-ribulose 1,5-bisphosphate + CO2 + H2O. It catalyses the reaction D-ribulose 1,5-bisphosphate + O2 = 2-phosphoglycolate + (2R)-3-phosphoglycerate + 2 H(+). Its function is as follows. RuBisCO catalyzes two reactions: the carboxylation of D-ribulose 1,5-bisphosphate, the primary event in carbon dioxide fixation, as well as the oxidative fragmentation of the pentose substrate in the photorespiration process. Both reactions occur simultaneously and in competition at the same active site. This Phelline comosa protein is Ribulose bisphosphate carboxylase large chain.